The chain runs to 348 residues: Ketol-acid reductoisomerase (NADP(+)) (348 aa).

Positions 1 to 179 (MDVHYDADPA…GGTHAGVIET (179 aa)) constitute a KARI N-terminal Rossmann domain. NADP(+)-binding positions include 22-25 (YGSQ), Arg-45, Ser-48, Ser-50, and 80-83 (DQHQ). His-105 is a catalytic residue. Position 131 (Gly-131) interacts with NADP(+). The 146-residue stretch at 180-325 (TFKDETETDL…QTLRGMMPWL (146 aa)) folds into the KARI C-terminal knotted domain. The Mg(2+) site is built by Asp-188, Glu-192, Glu-224, and Glu-228. Ser-249 serves as a coordination point for substrate. The segment at 323–348 (PWLNGDETSADEDAPDAADTAPASSS) is disordered. Positions 339 to 348 (AADTAPASSS) are enriched in low complexity.

Belongs to the ketol-acid reductoisomerase family. It depends on Mg(2+) as a cofactor.

The enzyme catalyses (2R)-2,3-dihydroxy-3-methylbutanoate + NADP(+) = (2S)-2-acetolactate + NADPH + H(+). The catalysed reaction is (2R,3R)-2,3-dihydroxy-3-methylpentanoate + NADP(+) = (S)-2-ethyl-2-hydroxy-3-oxobutanoate + NADPH + H(+). It participates in amino-acid biosynthesis; L-isoleucine biosynthesis; L-isoleucine from 2-oxobutanoate: step 2/4. It functions in the pathway amino-acid biosynthesis; L-valine biosynthesis; L-valine from pyruvate: step 2/4. Involved in the biosynthesis of branched-chain amino acids (BCAA). Catalyzes an alkyl-migration followed by a ketol-acid reduction of (S)-2-acetolactate (S2AL) to yield (R)-2,3-dihydroxy-isovalerate. In the isomerase reaction, S2AL is rearranged via a Mg-dependent methyl migration to produce 3-hydroxy-3-methyl-2-ketobutyrate (HMKB). In the reductase reaction, this 2-ketoacid undergoes a metal-dependent reduction by NADPH to yield (R)-2,3-dihydroxy-isovalerate. This is Ketol-acid reductoisomerase (NADP(+)) from Salinibacter ruber (strain DSM 13855 / M31).